We begin with the raw amino-acid sequence, 268 residues long: Forkhead box protein R1 (268 aa).

The disordered stretch occupies residues 91–126; it reads EDSCSEASEVQQPLPPCRQKRKQRRSTVPLPLAPGR. The fork-head DNA-binding region spans 149–248; it reads RPPLHYFHLI…KEARTLASTQ (100 aa).

Expressed in adult germ cells (at protein level). Expressed in heart, liver, lung and embryonic brain.

Its subcellular location is the nucleus. The protein resides in the cytoplasm. It localises to the perinuclear region. Transcription factor which acts as both an activator and a repressor. Activates transcription of a number of genes including the heat shock chaperones HSPA1A and HSPA6 and the antioxidant NADPH-dependent reductase DHRS2 which are involved in protection against oxidative stress. Required for normal brain development. The protein is Forkhead box protein R1 (Foxr1) of Mus musculus (Mouse).